A 298-amino-acid polypeptide reads, in one-letter code: Junctional adhesion molecule B (298 aa).

Positions M1–G28 are cleaved as a signal peptide. Residues F29–S238 are Extracellular-facing. An Ig-like V-type domain is found at P32–T127. Disulfide bonds link C50–C109 and C155–C214. N98, N187, and N236 each carry an N-linked (GlcNAc...) asparagine glycan. One can recognise an Ig-like C2-type domain in the interval P134–S238. A helical membrane pass occupies residues G239 to C259. Over Y260–I298 the chain is Cytoplasmic.

The protein belongs to the immunoglobulin superfamily. As to expression, highly expressed in heart, placenta, lung, foreskin and lymph node. Prominently expressed on high endothelial venules and also present on the endothelia of other vessels (at protein level). Also expressed in the brain in the caudate nuclei.

Its subcellular location is the cell membrane. The protein localises to the cell junction. It localises to the tight junction. Its function is as follows. Junctional adhesion protein that mediates heterotypic cell-cell interactions with its cognate receptor JAM3 to regulate different cellular processes. Plays a role in homing and mobilization of hematopoietic stem and progenitor cells within the bone marrow. At the surface of bone marrow stromal cells, it contributes to the retention of the hematopoietic stem and progenitor cells expressing JAM3. Plays a central role in leukocytes extravasation by facilitating not only transmigration but also tethering and rolling of leukocytes along the endothelium. Tethering and rolling of leukocytes are dependent on the binding by JAM2 of the integrin alpha-4/beta-1. Plays a role in spermatogenesis where JAM2 and JAM3, which are respectively expressed by Sertoli and germ cells, mediate an interaction between both cell types and play an essential role in the anchorage of germ cells onto Sertoli cells and the assembly of cell polarity complexes during spermatid differentiation. Also functions as an inhibitory somatodendritic cue that prevents the myelination of non-axonal parts of neurons. During myogenesis, it is involved in myocyte fusion. May also play a role in angiogenesis. This is Junctional adhesion molecule B from Homo sapiens (Human).